The primary structure comprises 182 residues: LIM domain-containing protein C (182 aa).

2 consecutive LIM zinc-binding domains span residues 3–63 and 110–170; these read SICP…LFRQ and TNCP…KFGP.

It is found in the cell projection. The protein resides in the pseudopodium. It localises to the cytoplasm. Its subcellular location is the cell cortex. The protein localises to the cytoskeleton. Its function is as follows. Binds to F-actin and may modulate the chemotactic response during early development and contribute to the maintenance of the strength of the actin cytoskeleton. The chain is LIM domain-containing protein C (limC) from Dictyostelium discoideum (Social amoeba).